The sequence spans 294 residues: NADH-cytochrome b5 reductase 1 (294 aa).

Residues 13–33 form a helical membrane-spanning segment; it reads PHASFLGGLVVAAILGLFIFF. Positions 44–147 constitute an FAD-binding FR-type domain; the sequence is VEWRSFKLVD…KGPKGKFVYT (104 aa). FAD contacts are provided by residues 127–142 and 153–185; these read SLLTIGQEIKVKGPKG and HLVMIAGGTGITPMYQIIKSSIKTPGDKTRLSL.

This sequence belongs to the flavoprotein pyridine nucleotide cytochrome reductase family. In terms of assembly, monomer. Component of the 2-(3-amino-3-carboxypropyl)histidine synthase complex composed of DPH1, DPH2, DPH3 and a NADH-dependent reductase, predominantly CBR1. It depends on FAD as a cofactor.

The protein resides in the mitochondrion outer membrane. It carries out the reaction 2 Fe(III)-[cytochrome b5] + NADH = 2 Fe(II)-[cytochrome b5] + NAD(+) + H(+). It catalyses the reaction 2 Fe(3+)-[Dph3] + NADH = 2 Fe(2+)-[Dph3] + NAD(+) + H(+). The protein operates within protein modification; peptidyl-diphthamide biosynthesis. Its function is as follows. NADH-dependent reductase for DPH3 and cytochrome b5. Required for the first step of diphthamide biosynthesis, a post-translational modification of histidine which occurs in elongation factor 2. DPH1 and DPH2 transfer a 3-amino-3-carboxypropyl (ACP) group from S-adenosyl-L-methionine (SAM) to a histidine residue, the reaction is assisted by a reduction system comprising DPH3 and a NADH-dependent reductase, predominantly CBR1. By reducing DPH3, also involved in the formation of the tRNA wobble base modification mcm5s 2U (5-methoxycarbonylmethyl-2-thiouridine), mediated by the elongator complex. The cytochrome b5/NADH cytochrome b5 reductase electron transfer system supports the catalytic activity of several sterol biosynthetic enzymes. This Cryptococcus neoformans var. neoformans serotype D (strain B-3501A) (Filobasidiella neoformans) protein is NADH-cytochrome b5 reductase 1 (CBR1).